We begin with the raw amino-acid sequence, 152 residues long: Endoribonuclease YbeY (152 aa).

Zn(2+) is bound by residues histidine 101, histidine 105, and histidine 111. The disordered stretch occupies residues 132-152; sequence PSSLIERTTKPAKKAAKRKKR. The span at 141-152 shows a compositional bias: basic residues; it reads KPAKKAAKRKKR.

Belongs to the endoribonuclease YbeY family. Requires Zn(2+) as cofactor.

It localises to the cytoplasm. Its function is as follows. Single strand-specific metallo-endoribonuclease involved in late-stage 70S ribosome quality control and in maturation of the 3' terminus of the 16S rRNA. The polypeptide is Endoribonuclease YbeY (Koribacter versatilis (strain Ellin345)).